The chain runs to 808 residues: DNA gyrase subunit B (808 aa).

The Toprim domain maps to 429-544 (SELFIVEGDS…KGYLYIAQPP (116 aa)). Residues Glu435, Asp509, and Asp511 each contribute to the Mg(2+) site.

Belongs to the type II topoisomerase GyrB family. In terms of assembly, heterotetramer, composed of two GyrA and two GyrB chains. In the heterotetramer, GyrA contains the active site tyrosine that forms a transient covalent intermediate with DNA, while GyrB binds cofactors and catalyzes ATP hydrolysis. Mg(2+) is required as a cofactor. Requires Mn(2+) as cofactor. Ca(2+) serves as cofactor.

Its subcellular location is the cytoplasm. The enzyme catalyses ATP-dependent breakage, passage and rejoining of double-stranded DNA.. Its function is as follows. A type II topoisomerase that negatively supercoils closed circular double-stranded (ds) DNA in an ATP-dependent manner to modulate DNA topology and maintain chromosomes in an underwound state. Negative supercoiling favors strand separation, and DNA replication, transcription, recombination and repair, all of which involve strand separation. Also able to catalyze the interconversion of other topological isomers of dsDNA rings, including catenanes and knotted rings. Type II topoisomerases break and join 2 DNA strands simultaneously in an ATP-dependent manner. This is DNA gyrase subunit B from Rickettsia bellii (strain RML369-C).